The chain runs to 694 residues: Prolyl 3-hydroxylase 2 (694 aa).

The N-terminal stretch at 1–23 (MAPGSRSWGAVLLLAAMLPAACG) is a signal peptide. 4 TPR repeats span residues 35–68 (FDAL…RREL), 136–169 (RVPY…NPEH), 196–229 (HMED…YYAE), and 292–325 (PLHY…HPDD). A coiled-coil region spans residues 386 to 418 (KRYGARQDEHSVPSSISSEPEDGPRLSLTKKPT). The interval 395 to 427 (HSVPSSISSEPEDGPRLSLTKKPTPKPDRELKE) is disordered. Residues N446 and N535 are each glycosylated (N-linked (GlcNAc...) asparagine). One can recognise a Fe2OG dioxygenase domain in the interval 543 to 657 (THLVCRTALS…RCAVALWFTL (115 aa)). Residues H566, D568, and H638 each coordinate Fe cation. R648 is a catalytic residue. Positions 691–694 (KDEL) match the Prevents secretion from ER motif.

Belongs to the leprecan family. The cofactor is Fe cation. It depends on L-ascorbate as a cofactor.

It localises to the endoplasmic reticulum. The protein resides in the sarcoplasmic reticulum. The protein localises to the golgi apparatus. The enzyme catalyses L-prolyl-[collagen] + 2-oxoglutarate + O2 = trans-3-hydroxy-L-prolyl-[collagen] + succinate + CO2. Functionally, prolyl 3-hydroxylase that catalyzes the post-translational formation of 3-hydroxyproline on collagens. Contributes to proline 3-hydroxylation of collagen COL4A1 and COL1A1 in tendons, the eye sclera and in the eye lens capsule. Has high activity with the type IV collagen COL4A1, and lower activity with COL1A1. Catalyzes hydroxylation of the first Pro in Gly-Pro-Hyp sequences where Hyp is 4-hydroxyproline. Has no activity on substrates that lack 4-hydroxyproline in the third position. The protein is Prolyl 3-hydroxylase 2 of Gallus gallus (Chicken).